A 182-amino-acid chain; its full sequence is ATP-dependent protease subunit HslV (182 aa).

Residue Thr-10 is part of the active site. Ala-166, Cys-169, and Ser-172 together coordinate Na(+).

This sequence belongs to the peptidase T1B family. HslV subfamily. In terms of assembly, a double ring-shaped homohexamer of HslV is capped on each side by a ring-shaped HslU homohexamer. The assembly of the HslU/HslV complex is dependent on binding of ATP.

The protein localises to the cytoplasm. It catalyses the reaction ATP-dependent cleavage of peptide bonds with broad specificity.. Its activity is regulated as follows. Allosterically activated by HslU binding. In terms of biological role, protease subunit of a proteasome-like degradation complex believed to be a general protein degrading machinery. The polypeptide is ATP-dependent protease subunit HslV (Rickettsia prowazekii (strain Madrid E)).